Consider the following 188-residue polypeptide: Probable thymidylate kinase (188 aa).

Position 11 to 18 (11 to 18) interacts with ATP; the sequence is GIDGSGKT.

The protein belongs to the thymidylate kinase family.

It catalyses the reaction dTMP + ATP = dTDP + ADP. In Methanocaldococcus jannaschii (strain ATCC 43067 / DSM 2661 / JAL-1 / JCM 10045 / NBRC 100440) (Methanococcus jannaschii), this protein is Probable thymidylate kinase (tmk).